An 87-amino-acid polypeptide reads, in one-letter code: RNA-binding protein Hfq (87 aa).

In terms of domain architecture, Sm spans 9–68; that stretch reads DPFLNALRRERIPVSIYLVNGIKLQGQIESFDQFVILLKNTVSQMVYKHAISTVVPARAV.

Belongs to the Hfq family. As to quaternary structure, homohexamer.

Functionally, RNA chaperone that binds small regulatory RNA (sRNAs) and mRNAs to facilitate mRNA translational regulation in response to envelope stress, environmental stress and changes in metabolite concentrations. Also binds with high specificity to tRNAs. The protein is RNA-binding protein Hfq of Aeromonas hydrophila subsp. hydrophila (strain ATCC 7966 / DSM 30187 / BCRC 13018 / CCUG 14551 / JCM 1027 / KCTC 2358 / NCIMB 9240 / NCTC 8049).